The sequence spans 134 residues: Small ribosomal subunit protein uS9c (134 aa).

A disordered region spans residues Gln105–Arg134. The segment covering Lys115 to Arg134 has biased composition (basic residues).

It belongs to the universal ribosomal protein uS9 family.

It is found in the plastid. Its subcellular location is the chloroplast. This is Small ribosomal subunit protein uS9c (rps9) from Nephroselmis olivacea (Green alga).